A 140-amino-acid polypeptide reads, in one-letter code: Large ribosomal subunit protein uL11 (140 aa).

Belongs to the universal ribosomal protein uL11 family. As to quaternary structure, part of the ribosomal stalk of the 50S ribosomal subunit. Interacts with L10 and the large rRNA to form the base of the stalk. L10 forms an elongated spine to which L12 dimers bind in a sequential fashion forming a multimeric L10(L12)X complex. Post-translationally, one or more lysine residues are methylated.

Forms part of the ribosomal stalk which helps the ribosome interact with GTP-bound translation factors. This Desulfovibrio desulfuricans (strain ATCC 27774 / DSM 6949 / MB) protein is Large ribosomal subunit protein uL11.